The chain runs to 238 residues: 7-cyano-7-deazaguanine synthase (238 aa).

Residue 14 to 24 coordinates ATP; the sequence is FSGGQDSATCL. Zn(2+)-binding residues include cysteine 202, cysteine 217, cysteine 220, and cysteine 223.

The protein belongs to the QueC family. Zn(2+) is required as a cofactor.

It carries out the reaction 7-carboxy-7-deazaguanine + NH4(+) + ATP = 7-cyano-7-deazaguanine + ADP + phosphate + H2O + H(+). It participates in purine metabolism; 7-cyano-7-deazaguanine biosynthesis. In terms of biological role, catalyzes the ATP-dependent conversion of 7-carboxy-7-deazaguanine (CDG) to 7-cyano-7-deazaguanine (preQ(0)). The polypeptide is 7-cyano-7-deazaguanine synthase (Nitrobacter hamburgensis (strain DSM 10229 / NCIMB 13809 / X14)).